Reading from the N-terminus, the 180-residue chain is Large ribosomal subunit protein uL6 (180 aa).

The protein belongs to the universal ribosomal protein uL6 family. Part of the 50S ribosomal subunit.

In terms of biological role, this protein binds to the 23S rRNA, and is important in its secondary structure. It is located near the subunit interface in the base of the L7/L12 stalk, and near the tRNA binding site of the peptidyltransferase center. The chain is Large ribosomal subunit protein uL6 from Christiangramia forsetii (strain DSM 17595 / CGMCC 1.15422 / KT0803) (Gramella forsetii).